Consider the following 63-residue polypeptide: Kurtoxin-like II (63 aa).

One can recognise an LCN-type CS-alpha/beta domain in the interval 2–62 (IDGYPVDYWN…ARIKRSGRCR (61 aa)). 4 cysteine pairs are disulfide-bonded: cysteine 12–cysteine 61, cysteine 16–cysteine 37, cysteine 23–cysteine 44, and cysteine 27–cysteine 46.

The protein belongs to the long (4 C-C) scorpion toxin superfamily. Sodium channel inhibitor family. Alpha subfamily. In terms of tissue distribution, expressed by the venom gland.

The protein resides in the secreted. This neurotoxin acts on sodium and calcium channels. Potently inhibits native voltage-gated T-type calcium channel activity in mouse male germ cells. Also binds Cav3.1/CACNA1G, Cav3.2/CACNA1H, and Cav3.3/CACNA1I T-type calcium channels and inhibits the channels by modifying voltage-dependent gating. In addition, binds and significantly inhibits the inactivation of activated sodium channels (Nav1.2/SCN2A and Nav1.5/SCN5A). This is Kurtoxin-like II from Parabuthus granulatus (Granulated thick-tailed scorpion).